The chain runs to 159 residues: uncharacterized protein (159 aa).

Residues 4–153 (IKTDDLTHPA…HSRFLSLTLC (150 aa)) enclose the N-acetyltransferase domain.

It belongs to the acetyltransferase family.

This is an uncharacterized protein from Escherichia coli (strain K12).